A 449-amino-acid chain; its full sequence is Elongation factor 1-alpha (449 aa).

In terms of domain architecture, tr-type G spans 5 to 230 (KVHMNLVVVG…DMLEPPVRPS (226 aa)). Residues 14-21 (GHVDAGKS) form a G1 region. 14–21 (GHVDAGKS) provides a ligand contact to GTP. The tract at residues 70–74 (GITID) is G2. The G3 stretch occupies residues 91-94 (DAPG). GTP contacts are provided by residues 91-95 (DAPGH) and 153-156 (NKMD). The tract at residues 153–156 (NKMD) is G4. Positions 194 to 196 (SGW) are G5. Residue E362 is modified to 5-glutamyl glycerylphosphorylethanolamine.

It belongs to the TRAFAC class translation factor GTPase superfamily. Classic translation factor GTPase family. EF-Tu/EF-1A subfamily. Post-translationally, phosphatidylethanolamine (PE) is a direct precursor of the ethanolamine-phosphoglycerol (EPG) moiety.

The protein resides in the cytoplasm. Its function is as follows. This protein promotes the GTP-dependent binding of aminoacyl-tRNA to the A-site of ribosomes during protein biosynthesis. This is Elongation factor 1-alpha (TEF1) from Trypanosoma brucei brucei.